The following is a 276-amino-acid chain: N-acyl homoserine lactonase AiiB (276 aa).

Zn(2+) contacts are provided by His-111, His-113, His-116, His-191, Asp-213, and His-259.

This sequence belongs to the metallo-beta-lactamase superfamily. It depends on Zn(2+) as a cofactor.

It carries out the reaction an N-acyl-L-homoserine lactone + H2O = an N-acyl-L-homoserine + H(+). The chain is N-acyl homoserine lactonase AiiB from Rhizobium rhizogenes (strain K84 / ATCC BAA-868) (Agrobacterium radiobacter).